The primary structure comprises 182 residues: Large ribosomal subunit protein bL25 (182 aa).

Belongs to the bacterial ribosomal protein bL25 family. CTC subfamily. In terms of assembly, part of the 50S ribosomal subunit; part of the 5S rRNA/L5/L18/L25 subcomplex. Contacts the 5S rRNA. Binds to the 5S rRNA independently of L5 and L18.

This is one of the proteins that binds to the 5S RNA in the ribosome where it forms part of the central protuberance. This Borrelia turicatae (strain 91E135) protein is Large ribosomal subunit protein bL25.